Reading from the N-terminus, the 341-residue chain is Probable membrane-associated kinase regulator 1 (341 aa).

Disordered regions lie at residues 1 to 29 (MRRQ…FEFN), 67 to 122 (TLGS…SSRP), 158 to 185 (PKTN…KRMS), 206 to 230 (LSPK…NNIR), and 288 to 310 (RGGF…SVSS). Low complexity-rich tracts occupy residues 12 to 29 (PPQS…FEFN), 67 to 108 (TLGS…SFPL), and 167 to 180 (SSSS…APSS). Polar residues predominate over residues 208–230 (PKQSSNIKTESSSSLKDSGNNIR). A compositionally biased stretch (low complexity) spans 297–310 (SCSSSSSNNNSVSS).

A C-terminus-derived peptide binds BRI1 in vitro.

The protein resides in the cell membrane. In terms of biological role, may negatively regulate brassinosteroid signaling. The protein is Probable membrane-associated kinase regulator 1 (MAKR1) of Arabidopsis thaliana (Mouse-ear cress).